Here is a 1053-residue protein sequence, read N- to C-terminus: Carbamoyl phosphate synthase large chain (1053 aa).

The tract at residues 1-397 (MPKNTSLKKV…GFKKALRSLD (397 aa)) is carboxyphosphate synthetic domain. R127, R167, G173, G174, E206, V208, E213, G239, V240, H241, Q282, and E294 together coordinate ATP. The ATP-grasp 1 domain maps to 131-323 (KKLMLEIGEP…IARVAAKVAI (193 aa)). Mg(2+)-binding residues include Q282, E294, and N296. Mn(2+) contacts are provided by Q282, E294, and N296. Residues 398-530 (TDIYRHTDLN…YSTWEQECEL (133 aa)) are oligomerization domain. Residues 531–919 (TQSDRKKILI…YKASQAADNT (389 aa)) are carbamoyl phosphate synthetic domain. The 192-residue stretch at 661–852 (SVLLDQNNIP…LAKIAAKLML (192 aa)) folds into the ATP-grasp 2 domain. The ATP site is built by R697, R736, L738, E743, G768, V769, H770, S771, Q811, and E823. Q811, E823, and N825 together coordinate Mg(2+). Residues Q811, E823, and N825 each coordinate Mn(2+). Residues 918–1053 (NTIPLKGNVF…TVEPLSHYHS (136 aa)) form the MGS-like domain. The allosteric domain stretch occupies residues 920 to 1053 (IPLKGNVFIS…TVEPLSHYHS (134 aa)).

Belongs to the CarB family. As to quaternary structure, composed of two chains; the small (or glutamine) chain promotes the hydrolysis of glutamine to ammonia, which is used by the large (or ammonia) chain to synthesize carbamoyl phosphate. Tetramer of heterodimers (alpha,beta)4. Requires Mg(2+) as cofactor. The cofactor is Mn(2+).

It catalyses the reaction hydrogencarbonate + L-glutamine + 2 ATP + H2O = carbamoyl phosphate + L-glutamate + 2 ADP + phosphate + 2 H(+). The catalysed reaction is hydrogencarbonate + NH4(+) + 2 ATP = carbamoyl phosphate + 2 ADP + phosphate + 2 H(+). The protein operates within amino-acid biosynthesis; L-arginine biosynthesis; carbamoyl phosphate from bicarbonate: step 1/1. It functions in the pathway pyrimidine metabolism; UMP biosynthesis via de novo pathway; (S)-dihydroorotate from bicarbonate: step 1/3. Large subunit of the glutamine-dependent carbamoyl phosphate synthetase (CPSase). CPSase catalyzes the formation of carbamoyl phosphate from the ammonia moiety of glutamine, carbonate, and phosphate donated by ATP, constituting the first step of 2 biosynthetic pathways, one leading to arginine and/or urea and the other to pyrimidine nucleotides. The large subunit (synthetase) binds the substrates ammonia (free or transferred from glutamine from the small subunit), hydrogencarbonate and ATP and carries out an ATP-coupled ligase reaction, activating hydrogencarbonate by forming carboxy phosphate which reacts with ammonia to form carbamoyl phosphate. The polypeptide is Carbamoyl phosphate synthase large chain (Methanocorpusculum labreanum (strain ATCC 43576 / DSM 4855 / Z)).